Consider the following 349-residue polypeptide: Phosphoribosylformylglycinamidine cyclo-ligase (349 aa).

It belongs to the AIR synthase family.

Its subcellular location is the cytoplasm. It catalyses the reaction 2-formamido-N(1)-(5-O-phospho-beta-D-ribosyl)acetamidine + ATP = 5-amino-1-(5-phospho-beta-D-ribosyl)imidazole + ADP + phosphate + H(+). Its pathway is purine metabolism; IMP biosynthesis via de novo pathway; 5-amino-1-(5-phospho-D-ribosyl)imidazole from N(2)-formyl-N(1)-(5-phospho-D-ribosyl)glycinamide: step 2/2. This chain is Phosphoribosylformylglycinamidine cyclo-ligase, found in Lactobacillus helveticus (strain DPC 4571).